Reading from the N-terminus, the 95-residue chain is MRWVLAGLTALLLWLQGLLWFGEGGLNDVRGLSRSVEAQREEVDRLRQRNQALEAEVNDLKTGLEALEERARSELGMIREGETFYQIIEREDDAR.

The Cytoplasmic segment spans residues 1–3 (MRW). Residues 4–21 (VLAGLTALLLWLQGLLWF) traverse the membrane as a helical segment. The Periplasmic portion of the chain corresponds to 22 to 95 (GEGGLNDVRG…QIIEREDDAR (74 aa)). A coiled-coil region spans residues 26-76 (LNDVRGLSRSVEAQREEVDRLRQRNQALEAEVNDLKTGLEALEERARSELG).

The protein belongs to the FtsB family. In terms of assembly, part of a complex composed of FtsB, FtsL and FtsQ.

It is found in the cell inner membrane. Its function is as follows. Essential cell division protein. May link together the upstream cell division proteins, which are predominantly cytoplasmic, with the downstream cell division proteins, which are predominantly periplasmic. This is Cell division protein FtsB from Alkalilimnicola ehrlichii (strain ATCC BAA-1101 / DSM 17681 / MLHE-1).